The following is a 148-amino-acid chain: Large ribosomal subunit protein uL15A (148 aa).

Basic residues-rich tracts occupy residues 1-13 and 21-31; these read MPTH…KLRG and RIGKHRKHPGG. The disordered stretch occupies residues 1–36; that stretch reads MPTHVSKTRKLRGHVSAGHGRIGKHRKHPGGRGKAG.

The protein belongs to the universal ribosomal protein uL15 family. Component of the large ribosomal subunit (LSU). Mature yeast ribosomes consist of a small (40S) and a large (60S) subunit. The 40S small subunit contains 1 molecule of ribosomal RNA (18S rRNA) and at least 33 different proteins. The large 60S subunit contains 3 rRNA molecules (25S, 5.8S and 5S rRNA) and at least 46 different proteins.

It localises to the cytoplasm. In terms of biological role, component of the ribosome, a large ribonucleoprotein complex responsible for the synthesis of proteins in the cell. The small ribosomal subunit (SSU) binds messenger RNAs (mRNAs) and translates the encoded message by selecting cognate aminoacyl-transfer RNA (tRNA) molecules. The large subunit (LSU) contains the ribosomal catalytic site termed the peptidyl transferase center (PTC), which catalyzes the formation of peptide bonds, thereby polymerizing the amino acids delivered by tRNAs into a polypeptide chain. The nascent polypeptides leave the ribosome through a tunnel in the LSU and interact with protein factors that function in enzymatic processing, targeting, and the membrane insertion of nascent chains at the exit of the ribosomal tunnel. The sequence is that of Large ribosomal subunit protein uL15A (rpl2802) from Schizosaccharomyces pombe (strain 972 / ATCC 24843) (Fission yeast).